The primary structure comprises 303 residues: Probable 5-dehydro-4-deoxyglucarate dehydratase (303 aa).

It belongs to the DapA family.

It carries out the reaction 5-dehydro-4-deoxy-D-glucarate + H(+) = 2,5-dioxopentanoate + CO2 + H2O. It functions in the pathway carbohydrate acid metabolism; D-glucarate degradation; 2,5-dioxopentanoate from D-glucarate: step 2/2. The sequence is that of Probable 5-dehydro-4-deoxyglucarate dehydratase from Pseudomonas putida (strain GB-1).